A 148-amino-acid polypeptide reads, in one-letter code: UPF0591 membrane protein C15E1.02c (148 aa).

Transmembrane regions (helical) follow at residues 14-34, 80-102, and 122-142; these read AILLGIAFDHAASFLVYGPLM, LLQLTGTVTLKGAFFVGLYVFGA, and ILVKTISSLVKSVGLSVALIG.

The protein belongs to the UPF0591 family.

Its subcellular location is the membrane. This chain is UPF0591 membrane protein C15E1.02c, found in Schizosaccharomyces pombe (strain 972 / ATCC 24843) (Fission yeast).